The primary structure comprises 473 residues: Allene oxide synthase CYP74A2 (473 aa).

Residues Lys-88, His-119, and Lys-123 each contribute to the heme b site. (13S)-hydroperoxy-(9Z,11E)-octadecadienoate-binding residues include Ser-199 and Lys-282. 2 residues coordinate heme b: Lys-424 and Cys-426.

Belongs to the cytochrome P450 family. Heme b is required as a cofactor.

The catalysed reaction is (13S)-hydroperoxy-(9Z,11E,15Z)-octadecatrienoate = (9Z,13S,15Z)-12,13-epoxyoctadeca-9,11,15-trienoate + H2O. It catalyses the reaction (13S)-hydroperoxy-(9Z,11E)-octadecadienoate = (9Z,13S)-12,13-epoxyoctadeca-9,11-dienoate + H2O. Its pathway is lipid metabolism; oxylipin biosynthesis. Cytochrome P450 enzyme involved in the biosynthesis of oxylipin jasmonates, important phytohormones acting as growth regulators and signaling molecules for plant defense. Functions as an allene oxide synthase that converts hydroperoxy fatty acids to unstable allene epoxides. Catalyzes the dehydration of 13-HPOTE ((13S)-hydroperoxy-(9Z,11E,15Z)-octadecatrienoate). Also catalyzes the dehydration of 13-HPODE ((13S)-hydroperoxy-(9Z,11E)-octadecadienoate). The protein is Allene oxide synthase CYP74A2 of Parthenium argentatum (Guayule rubber plant).